We begin with the raw amino-acid sequence, 234 residues long: ATP synthase subunit a 2 (234 aa).

A run of 5 helical transmembrane segments spans residues 20–40 (ATLI…WFVT), 78–98 (YLPF…LSVI), 107–127 (SLST…LYGV), 169–189 (VMSG…FFPV), and 194–214 (LGLL…MVFI).

This sequence belongs to the ATPase A chain family. As to quaternary structure, F-type ATPases have 2 components, CF(1) - the catalytic core - and CF(0) - the membrane proton channel. CF(1) has five subunits: alpha(3), beta(3), gamma(1), delta(1), epsilon(1). CF(0) has four main subunits: a, b, b' and c.

Its subcellular location is the cellular thylakoid membrane. Its function is as follows. Key component of the proton channel; it plays a direct role in the translocation of protons across the membrane. This chain is ATP synthase subunit a 2, found in Acaryochloris marina (strain MBIC 11017).